Reading from the N-terminus, the 111-residue chain is Cytochrome c (111 aa).

A1 is subject to N-acetylalanine. 3 residues coordinate heme c: C22, C25, and H26. Position 80 is an N6,N6,N6-trimethyllysine (K80). M88 contributes to the heme c binding site. K94 is modified (N6,N6,N6-trimethyllysine).

The protein belongs to the cytochrome c family. In terms of processing, binds 1 heme c group covalently per subunit.

It is found in the mitochondrion intermembrane space. Its function is as follows. Electron carrier protein. The oxidized form of the cytochrome c heme group can accept an electron from the heme group of the cytochrome c1 subunit of cytochrome reductase. Cytochrome c then transfers this electron to the cytochrome oxidase complex, the final protein carrier in the mitochondrial electron-transport chain. In Guizotia abyssinica (Niger), this protein is Cytochrome c.